Here is a 319-residue protein sequence, read N- to C-terminus: Major intracellular serine protease (319 aa).

Positions 1 to 17 are excised as a propeptide; sequence MNGEIRLIPYVTNEQIM. Residues 23-307 form the Peptidase S8 domain; that stretch reads PEGIKVIKAP…FLYLTAPDEL (285 aa). Catalysis depends on charge relay system residues aspartate 50, histidine 87, and serine 246.

The protein belongs to the peptidase S8 family. In terms of assembly, homodimer.

It is found in the cytoplasm. Major intracellular protease produced by Bacillus subtilis. The sequence is that of Major intracellular serine protease (isp) from Bacillus subtilis (strain 168).